The sequence spans 861 residues: Valine--tRNA ligase (861 aa).

Residues 42-52 carry the 'HIGH' region motif; it reads PNITGRIHMGH. The 'KMSKS' region motif lies at 521-525; the sequence is KMSKS. Residue K524 participates in ATP binding. A coiled-coil region spans residues 792–861; it reads VAGLNLQSEI…ILNQILGDLM (70 aa).

The protein belongs to the class-I aminoacyl-tRNA synthetase family. ValS type 1 subfamily. Monomer.

The protein resides in the cytoplasm. The enzyme catalyses tRNA(Val) + L-valine + ATP = L-valyl-tRNA(Val) + AMP + diphosphate. Functionally, catalyzes the attachment of valine to tRNA(Val). As ValRS can inadvertently accommodate and process structurally similar amino acids such as threonine, to avoid such errors, it has a 'posttransfer' editing activity that hydrolyzes mischarged Thr-tRNA(Val) in a tRNA-dependent manner. The chain is Valine--tRNA ligase from Pseudothermotoga lettingae (strain ATCC BAA-301 / DSM 14385 / NBRC 107922 / TMO) (Thermotoga lettingae).